A 266-amino-acid polypeptide reads, in one-letter code: Electron transfer flavoprotein subunit beta (266 aa).

Belongs to the ETF beta-subunit/FixA family. Heterodimer of an alpha and a beta subunit. FAD serves as cofactor. It depends on AMP as a cofactor.

Its function is as follows. The electron transfer flavoprotein serves as a specific electron acceptor for other dehydrogenases. It transfers the electrons to the main respiratory chain via ETF-ubiquinone oxidoreductase (ETF dehydrogenase). The protein is Electron transfer flavoprotein subunit beta (etfB) of Mycobacterium bovis (strain ATCC BAA-935 / AF2122/97).